Consider the following 401-residue polypeptide: MRTLWQHCHAATMTEGRYSVIEDAAIVTSAGLIEWIGPRGDVPPVTADRVVDLGGAWVTPGLIDCHTHAVFGGNRSGEFEQRLQGVSYAEIAAQGGGIASTVRATRAASEDALLASARQRVQALMRDGVTTIEIKSGYGLDLENERKMLRVARRLGEELPVTVRSTCLAAHALPPEYTGRADDYIDHICEQMLPALAAEGLVDAVDAFCEHLAFSPAQVERLFIKARGLGLPVKLHAEQLSSLHGSSLAARYQALSADHLEFMTEEDAIAMAKAGTVAVLLPGAFYFLRETQLPPMDALRRHGVKIALASDLNPGTSPGLSLRLMLNMGCTCFRMTPEEALAGVTLHAATALGLGHSHGSLEVGKVADFVAWRIERPADLSYWLGGDLPKRVVRLGHEISN.

The Fe(3+) site is built by His-66 and His-68. Residues His-66 and His-68 each coordinate Zn(2+). 3 residues coordinate 4-imidazolone-5-propanoate: Arg-75, Tyr-138, and His-171. Position 138 (Tyr-138) interacts with N-formimidoyl-L-glutamate. A Fe(3+)-binding site is contributed by His-236. His-236 serves as a coordination point for Zn(2+). Residue Gln-239 coordinates 4-imidazolone-5-propanoate. Position 311 (Asp-311) interacts with Fe(3+). Asp-311 is a Zn(2+) binding site. N-formimidoyl-L-glutamate contacts are provided by Asn-313 and Gly-315. Position 316 (Thr-316) interacts with 4-imidazolone-5-propanoate.

This sequence belongs to the metallo-dependent hydrolases superfamily. HutI family. Zn(2+) is required as a cofactor. It depends on Fe(3+) as a cofactor.

It is found in the cytoplasm. It carries out the reaction 4-imidazolone-5-propanoate + H2O = N-formimidoyl-L-glutamate. The protein operates within amino-acid degradation; L-histidine degradation into L-glutamate; N-formimidoyl-L-glutamate from L-histidine: step 3/3. Catalyzes the hydrolytic cleavage of the carbon-nitrogen bond in imidazolone-5-propanoate to yield N-formimidoyl-L-glutamate. It is the third step in the universal histidine degradation pathway. The chain is Imidazolonepropionase from Pseudomonas entomophila (strain L48).